The chain runs to 177 residues: Ribosome maturation factor RimM (177 aa).

One can recognise a PRC barrel domain in the interval 104–177 (GVDGIWADLI…IIKVKLMEGM (74 aa)).

The protein belongs to the RimM family. In terms of assembly, binds ribosomal protein uS19.

Its subcellular location is the cytoplasm. Its function is as follows. An accessory protein needed during the final step in the assembly of 30S ribosomal subunit, possibly for assembly of the head region. Essential for efficient processing of 16S rRNA. May be needed both before and after RbfA during the maturation of 16S rRNA. It has affinity for free ribosomal 30S subunits but not for 70S ribosomes. The sequence is that of Ribosome maturation factor RimM from Magnetococcus marinus (strain ATCC BAA-1437 / JCM 17883 / MC-1).